Consider the following 301-residue polypeptide: MGDLSCWTKVPGFTLTGELQYLKQVDDILRYGVRKRDRTGIGTLSLFGMQARYNLRNEFPLLTTKRVFWRAVVEELLWFIRGSTDSKELAAKDIHIWDIYGSSKFLNRNGFHKRHTGDLGPIYGFQWRHFGAEYKDCQSNYLQQGIDQLQTVIDTIKTNPESRRMIISSWNPKDIPLMVLPPCHTLCQFYVANGELSCQVYQRSGDMGLGVPFNIAGYALLTYIVAHVTGLKTGDLIHTMGDAHIYLNHIDALKVQLARSPKPFPCLKIIRNVTDINDFKWDDFQLDGYNPHPPLKMEMAL.

Residues arginine 38 and 163 to 164 (RR) contribute to the dUMP site. The active-site Nucleophile is the cysteine 183. Residues 203-206 (RSGD), asparagine 214, and 244-246 (HIY) each bind dUMP. Residue aspartate 206 coordinates (6R)-5,10-methylene-5,6,7,8-tetrahydrofolate. Alanine 300 contacts (6R)-5,10-methylene-5,6,7,8-tetrahydrofolate.

This sequence belongs to the thymidylate synthase family. In terms of assembly, homodimer.

The catalysed reaction is dUMP + (6R)-5,10-methylene-5,6,7,8-tetrahydrofolate = 7,8-dihydrofolate + dTMP. It functions in the pathway pyrimidine metabolism; dTTP biosynthesis. In terms of biological role, catalyzes the reductive methylation of deoxyuridylate to thymidylate. This Varicella-zoster virus (strain Dumas) (HHV-3) protein is Thymidylate synthase.